The following is a 553-amino-acid chain: Coiled-coil domain-containing protein 22 homolog (553 aa).

The segment at 236–264 is disordered; that stretch reads DSEEPAPPPISTVKPDASAEEEASPIQEL. 3 coiled-coil regions span residues 261–286, 314–407, and 498–549; these read IQEL…KAHA, ERTS…QSLA, and NVTK…VEQP.

The protein belongs to the CCDC22 family.

The sequence is that of Coiled-coil domain-containing protein 22 homolog from Drosophila erecta (Fruit fly).